The sequence spans 307 residues: MTTAASPAALPADWRDFFALTKPRVMTLVIFTGICGLLAAPGAINPILGFTAILCIAMGAGGSAALNQWWEADIDAGMKRTAKRPLPSGRMQATDARDFGILISVASVGIMGIAINWLSAIILAAAIVYYAVIYTIWLKPRTPQNIVIGGGAGAFPPMIGWVAVTGEITLMPVLLFAIIFMWTPPHFWALALFVKTDYEKVGIPMMPVVKGEASTRRQILVYSILLIPFAVAPWAIGATGAIYGVSALLLTGAFAALSVPVATRRQIEGDTMKPEKRLFGFSILYLFALFAALVADRYLTPLIESAA.

Helical transmembrane passes span 28 to 48 (LVIF…NPIL), 50 to 70 (FTAI…NQWW), 99 to 117 (FGIL…AINW), 121 to 138 (IILA…TIWL), 146 to 166 (IVIG…AVTG), 173 to 193 (VLLF…LALF), 219 to 239 (ILVY…IGAT), 241 to 261 (AIYG…SVPV), and 278 to 298 (LFGF…ADRY).

The protein belongs to the UbiA prenyltransferase family. Protoheme IX farnesyltransferase subfamily.

The protein localises to the cell inner membrane. It catalyses the reaction heme b + (2E,6E)-farnesyl diphosphate + H2O = Fe(II)-heme o + diphosphate. Its pathway is porphyrin-containing compound metabolism; heme O biosynthesis; heme O from protoheme: step 1/1. In terms of biological role, converts heme B (protoheme IX) to heme O by substitution of the vinyl group on carbon 2 of heme B porphyrin ring with a hydroxyethyl farnesyl side group. In Erythrobacter litoralis (strain HTCC2594), this protein is Protoheme IX farnesyltransferase.